The sequence spans 168 residues: Phosphopantetheine adenylyltransferase (168 aa).

T17 contacts substrate. ATP is bound by residues 17 to 18 (TF) and H25. Substrate is bound by residues K49, L81, and R95. ATP contacts are provided by residues 96 to 98 (GLR), E106, and 131 to 137 (LMYISST).

Belongs to the bacterial CoaD family. Homohexamer. Requires Mg(2+) as cofactor.

It localises to the cytoplasm. The catalysed reaction is (R)-4'-phosphopantetheine + ATP + H(+) = 3'-dephospho-CoA + diphosphate. Its pathway is cofactor biosynthesis; coenzyme A biosynthesis; CoA from (R)-pantothenate: step 4/5. Its function is as follows. Reversibly transfers an adenylyl group from ATP to 4'-phosphopantetheine, yielding dephospho-CoA (dPCoA) and pyrophosphate. The protein is Phosphopantetheine adenylyltransferase of Legionella pneumophila (strain Paris).